Here is a 31-residue protein sequence, read N- to C-terminus: Photosystem I reaction center subunit XII (31 aa).

A helical membrane pass occupies residues 7–26 (QISIILLIALIPAFFSLKLG).

Belongs to the PsaM family.

The protein resides in the plastid. The protein localises to the chloroplast thylakoid membrane. The sequence is that of Photosystem I reaction center subunit XII from Euglena myxocylindracea.